We begin with the raw amino-acid sequence, 408 residues long: Phosphoglycerate kinase (408 aa).

Residues 24–26 (DLN), Arg39, 62–65 (HLGR), Arg121, and Arg161 contribute to the substrate site. Residues Lys211, Gly307, Glu338, and 364-367 (GGDS) contribute to the ATP site.

Belongs to the phosphoglycerate kinase family. As to quaternary structure, monomer.

It localises to the cytoplasm. It catalyses the reaction (2R)-3-phosphoglycerate + ATP = (2R)-3-phospho-glyceroyl phosphate + ADP. It functions in the pathway carbohydrate degradation; glycolysis; pyruvate from D-glyceraldehyde 3-phosphate: step 2/5. The polypeptide is Phosphoglycerate kinase (Arthrobacter sp. (strain FB24)).